Reading from the N-terminus, the 427-residue chain is Glutamate-1-semialdehyde 2,1-aminomutase (427 aa).

N6-(pyridoxal phosphate)lysine is present on K265.

This sequence belongs to the class-III pyridoxal-phosphate-dependent aminotransferase family. HemL subfamily. Homodimer. The cofactor is pyridoxal 5'-phosphate.

It localises to the cytoplasm. It catalyses the reaction (S)-4-amino-5-oxopentanoate = 5-aminolevulinate. Its pathway is porphyrin-containing compound metabolism; protoporphyrin-IX biosynthesis; 5-aminolevulinate from L-glutamyl-tRNA(Glu): step 2/2. In Pasteurella multocida (strain Pm70), this protein is Glutamate-1-semialdehyde 2,1-aminomutase.